We begin with the raw amino-acid sequence, 590 residues long: Aspartate--tRNA ligase (590 aa).

Glu-172 provides a ligand contact to L-aspartate. The tract at residues 196-199 (QLFK) is aspartate. Position 218 (Arg-218) interacts with L-aspartate. ATP is bound by residues 218–220 (RDE) and Gln-227. L-aspartate is bound at residue His-449. Glu-483 contributes to the ATP binding site. Residue Arg-490 participates in L-aspartate binding. 535–538 (GLDR) lines the ATP pocket.

The protein belongs to the class-II aminoacyl-tRNA synthetase family. Type 1 subfamily. Homodimer.

It localises to the cytoplasm. The enzyme catalyses tRNA(Asp) + L-aspartate + ATP = L-aspartyl-tRNA(Asp) + AMP + diphosphate. Functionally, catalyzes the attachment of L-aspartate to tRNA(Asp) in a two-step reaction: L-aspartate is first activated by ATP to form Asp-AMP and then transferred to the acceptor end of tRNA(Asp). The protein is Aspartate--tRNA ligase of Mannheimia succiniciproducens (strain KCTC 0769BP / MBEL55E).